The sequence spans 379 residues: Isocitrate dehydrogenase [NAD] subunit 2, mitochondrial (379 aa).

Residues 1–27 (MSMLSTLRTAGSLRTFSRSACYSFQRF) constitute a mitochondrion transit peptide. Substrate contacts are provided by R129, R139, R160, and D247. Residues D247, D273, and D277 each contribute to the Mg(2+) site.

This sequence belongs to the isocitrate and isopropylmalate dehydrogenases family. As to quaternary structure, octamer of two non-identical subunits IDH1 and IDH2. Mg(2+) serves as cofactor. The cofactor is Mn(2+).

It localises to the mitochondrion. The catalysed reaction is D-threo-isocitrate + NAD(+) = 2-oxoglutarate + CO2 + NADH. Its function is as follows. Performs an essential role in the oxidative function of the citric acid cycle and is involved in glutamate biosynthesis. Also binds RNA; specifically to the 5'-untranslated leaders of mitochondrial mRNAs. This is Isocitrate dehydrogenase [NAD] subunit 2, mitochondrial (idh2) from Schizosaccharomyces pombe (strain 972 / ATCC 24843) (Fission yeast).